The sequence spans 424 residues: Cuticlin-1 (424 aa).

An N-terminal signal peptide occupies residues 1–18; sequence MTWKPIICLAALVLSASA. Residues 19 to 392 lie on the Extracellular side of the membrane; the sequence is IPVDNNVEGE…ATSTGICLTP (374 aa). Positions 32–277 constitute a ZP domain; the sequence is ECGPNSITVN…PTCSEPQGFG (246 aa). Cys197 and Cys252 are disulfide-bonded. 4 tandem repeats follow at residues 302-305, 307-311, 312-315, and 320-323. The interval 302-323 is 4 X 4 AA repeats of A-A-P-[AVI]; sequence AAPVAAAAPVAAPVAAAAAAPA. The helical transmembrane segment at 393-413 threads the bilayer; sequence IGFASFLGIGTIVATALSATI. The Cytoplasmic portion of the chain corresponds to 414 to 424; the sequence is FYVARPTSHKH.

The protein resides in the cell membrane. It is found in the secreted. Functionally, component of the cuticles, which contributes to the formation of extracellular envelopes protecting the organism from the environment. Plays a role in alae formation in dauer larvae. This chain is Cuticlin-1, found in Caenorhabditis elegans.